Reading from the N-terminus, the 287-residue chain is Putative sugar uptake protein EF_0928 (287 aa).

10 helical membrane passes run 5–27 (IALV…GGSA), 32–49 (LGMT…FFVI), 53–71 (LTTA…WSLG), 84–106 (VSVG…GAVF), 116–134 (FVVG…YLTA), 155–177 (IRAL…ATGL), 182–200 (IILP…FAFK), 207–229 (FVWM…LLTM), 234–256 (LAIS…IFLL), and 265–284 (MFYV…LLGY).

This sequence belongs to the GRP transporter (TC 2.A.7.5) family.

It localises to the cell membrane. The polypeptide is Putative sugar uptake protein EF_0928 (Enterococcus faecalis (strain ATCC 700802 / V583)).